A 119-amino-acid chain; its full sequence is Beta-2-microglobulin (119 aa).

A signal peptide spans 1–20 (MASSVVVALLVLLSLSGLEA). One can recognise an Ig-like C1-type domain in the interval 25 to 114 (PKIQVYSRHP…VTFSTPKTVK (90 aa)). Residues cysteine 45 and cysteine 100 are joined by a disulfide bond.

Belongs to the beta-2-microglobulin family. As to quaternary structure, heterodimer of an alpha chain and a beta chain. Beta-2-microglobulin is the beta-chain of major histocompatibility complex class I molecules.

Its subcellular location is the secreted. Component of the class I major histocompatibility complex (MHC). Involved in the presentation of peptide antigens to the immune system. In Callithrix aurita (White-eared marmoset), this protein is Beta-2-microglobulin (B2M).